The primary structure comprises 676 residues: MSRRALRRLRGEQRGQEPLGPDALKFVLLDDDDAEEEGPKPGLGGRRPGGAGKEGVRVNNRFELINTEDLEDDLVVNGERSDCTLPDSVSSGNKGRAKHGNAETKQDGGATKAGSSEQSNASGKLRKKKKKQKNKKSCTGESSENGLEDIDRILERIEDSSGFSHPGPPPLSSRKHVLYVEHRHLNPDTELKRYFGARAVLGEQRPRQRQRVYPKCTWLTTPKSTWPRYSKPGLSMRLLESKKGLSFFAFDHNEEYQQAQHKFLVAVESMEPNNIVVLLQTSPYHVDSLLQLSDACRFQEDQEMARDLIERALYSMECAFHPLFSLTSGTCRLDYRRPENRSFYLTLYKQMSFLEKRGCPRTALEYCKLILSLEPDEDPLCMLLLIDHLALRARNYEYLIRLFQEWEAHRNLSQLPNFAFSVPLAYFLLSQQTDLPEHELSSARQQASLLIQQALTMFPGVLMPLLEYCSVRPDATVSNHRFFGPDAEISQPPALGQLVSLYLGRSHFLWKEPAIMSWLEENVHEVLQAVDAGDPAVEACENRRKVLYQRAPRNIHRHVILSEIKEAVAALPSDVTTQSVMGFDPLPPLDTIYSYVRPERLSPVSHGNTIALFFRSLLPNYTTEGERLEEGVAGGPNRNQGLNRLMLAVRDMMANFHFNDLEVPREDNPEGEGDWD.

The segment at 1–145 (MSRRALRRLR…KSCTGESSEN (145 aa)) is disordered. Gly residues predominate over residues 41–53 (PGLGGRRPGGAGK). Residues 113–122 (AGSSEQSNAS) are compositionally biased toward polar residues. The segment covering 124-136 (KLRKKKKKQKNKK) has biased composition (basic residues). Phosphoserine is present on Ser602.

The protein belongs to the TCF25 family. As to quaternary structure, component of the ribosome quality control complex (RQC), composed of the E3 ubiquitin ligase LTN1, TCF25 and NEMF associated with the 60S ribosomal subunit. Interacts (via C-terminus) with NFATC4; the interaction leads to suppresson of NFATC4 transcription factor activity and is reduced following stimulation with angiotensin-2. Interacts with XIAP. As to expression, broadly expressed in the embryo during the early stages of organogenesis with highest levels in dorsal root ganglia and little or no expression in liver and skin.

Its subcellular location is the nucleus. It is found in the cytoplasm. It localises to the cytosol. In terms of biological role, component of the ribosome quality control complex (RQC), a ribosome-associated complex that mediates ubiquitination and extraction of incompletely synthesized nascent chains for proteasomal degradation. In the RQC complex, required to promote formation of 'Lys-48'-linked polyubiquitin chains during ubiquitination of incompletely synthesized proteins by LTN1. May negatively regulate the calcineurin-NFAT signaling cascade by suppressing the activity of transcription factor NFATC4. May play a role in cell death control. The polypeptide is Ribosome quality control complex subunit TCF25 (Tcf25) (Mus musculus (Mouse)).